Reading from the N-terminus, the 109-residue chain is Transcription initiation factor IIA subunit 2 (109 aa).

Belongs to the TFIIA subunit 2 family. In terms of assembly, TFIIA is a heterodimer of the large unprocessed subunit 1 and a small subunit gamma. It was originally believed to be a heterotrimer of an alpha (p35), a beta (p19) and a gamma subunit (p12). Interacts with NCOA6 general coactivator. TFIIA forms a complex with TBP. Interacts with HSF1 (via transactivation domain). Part of TBP-based Pol II pre-initiation complex (PIC), in which Pol II core assembles with general transcription factors and other specific initiation factors including GTF2E1, GTF2E2, GTF2F1, GTF2F2, TCEA1, ERCC2, ERCC3, GTF2H2, GTF2H3, GTF2H4, GTF2H5, GTF2A1, GTF2A2, GTF2B and TBP; this large multi-subunit PIC complex mediates DNA unwinding and targets Pol II core to the transcription start site where the first phosphodiester bond forms. (Microbial infection) Interacts with SV40 Large T antigen.

It is found in the nucleus. In terms of biological role, TFIIA is a component of the transcription machinery of RNA polymerase II and plays an important role in transcriptional activation. TFIIA in a complex with TBP mediates transcriptional activity. This is Transcription initiation factor IIA subunit 2 (GTF2A2) from Homo sapiens (Human).